The chain runs to 175 residues: Disulfide bond formation protein B 2 (175 aa).

Topologically, residues 1–9 (MYLARTRFL) are cytoplasmic. Residues 10–26 (FFLASLACASIIGTAFY) form a helical membrane-spanning segment. Topologically, residues 27 to 44 (LQQTFGLDPCFLCLIQRA) are periplasmic. An intrachain disulfide couples cysteine 36 to cysteine 39. A helical membrane pass occupies residues 45–61 (AIIACGVLALCAACHAP). Over 62–68 (GPTGMRR) the chain is Cytoplasmic. Residues 69 to 85 (YSLGFLLIALTGLVTAG) form a helical membrane-spanning segment. The Periplasmic portion of the chain corresponds to 86-142 (AQVWLQTASADQLIPFITKLEHLLSLLSLDMCIDRLRSDAMFCAEITWTLFGISLPE). Residues 143–161 (WSLLAFTGLALLPLYPLFS) traverse the membrane as a helical segment. Residues 162–175 (EFSHWLATKDRARY) are Cytoplasmic-facing.

The protein belongs to the DsbB family.

It is found in the cell inner membrane. Required for disulfide bond formation in some periplasmic proteins. Acts by oxidizing the DsbA protein. The polypeptide is Disulfide bond formation protein B 2 (Pseudomonas savastanoi pv. phaseolicola (strain 1448A / Race 6) (Pseudomonas syringae pv. phaseolicola (strain 1448A / Race 6))).